A 247-amino-acid polypeptide reads, in one-letter code: C-type lectin domain family 7 member A (247 aa).

At Met1 to Arg44 the chain is on the cytoplasmic side. The short motif at Tyr15–Leu18 is the ITAM-like element. Residues Leu45–Ser65 traverse the membrane as a helical; Signal-anchor for type II membrane protein segment. Over Thr66 to Val247 the chain is Extracellular. Residues Ser81–Glu101 are compositionally biased toward polar residues. The disordered stretch occupies residues Ser81 to Ser103. Asn91 carries an N-linked (GlcNAc...) asparagine glycan. Cystine bridges form between Cys120-Cys131, Cys148-Cys241, and Cys220-Cys233. Residues His127–Glu242 enclose the C-type lectin domain. Arg146–Ser153 contributes to the (1,3-beta-D-glucosyl)n binding site. Residues Lys157, Asp159, and Glu163 each coordinate a divalent metal cation. Position 195 (Glu195) interacts with (1,3-beta-D-glucosyl)n. Residue Glu242 participates in a divalent metal cation binding.

As to quaternary structure, homodimer. Interacts with SYK; participates in leukocyte activation in presence of fungal pathogens. Interacts with CD37; this interaction controls CLEC7A-mediated IL-6 production. In terms of processing, phosphorylated on tyrosine residues in response to beta-glucan binding. Detected in bone marrow, monocytes, macrophages, dendritic cells and natural killer cells.

The protein resides in the cell membrane. Its function is as follows. Lectin that functions as a pattern recognizing receptor (PRR) specific for beta-1,3-linked and beta-1,6-linked glucans, which constitute cell wall constituents from pathogenic bacteria and fungi. Necessary for the TLR2-mediated inflammatory response and activation of NF-kappa-B: upon beta-glucan binding, recruits SYK via its ITAM motif and promotes a signaling cascade that activates some CARD domain-BCL10-MALT1 (CBM) signalosomes, leading to the activation of NF-kappa-B and MAP kinase p38 (MAPK11, MAPK12, MAPK13 and/or MAPK14) pathways which stimulate expression of genes encoding pro-inflammatory cytokines and chemokines. Enhances cytokine production in macrophages and dendritic cells. Mediates production of reactive oxygen species in the cell. Mediates phagocytosis of C.albicans conidia. Binds T-cells in a way that does not involve their surface glycans and plays a role in T-cell activation. Stimulates T-cell proliferation. Induces phosphorylation of SCIMP after binding beta-glucans. This Bos taurus (Bovine) protein is C-type lectin domain family 7 member A (CLEC7A).